A 115-amino-acid chain; its full sequence is Large ribosomal subunit protein bL19 (115 aa).

The protein belongs to the bacterial ribosomal protein bL19 family.

In terms of biological role, this protein is located at the 30S-50S ribosomal subunit interface and may play a role in the structure and function of the aminoacyl-tRNA binding site. The chain is Large ribosomal subunit protein bL19 from Streptococcus thermophilus (strain CNRZ 1066).